The chain runs to 85 residues: Homeobox protein knotted-1-like 4 (85 aa).

The ELK domain maps to 1–21; the sequence is ELKYQLLKKYSGYLSSLRQEF. A DNA-binding region (homeobox; TALE-type) is located at residues 22–85; that stretch reads SKKKKKGKLP…NQRKRHWKPS (64 aa).

Belongs to the TALE/KNOX homeobox family. As to expression, strongly expressed in ear inflorescence primordia and shoot meristem. Weakly expressed in embryos. Absent from leaves.

It localises to the nucleus. Its function is as follows. Probably binds to the DNA sequence 5'-TGAC-3'. In Zea mays (Maize), this protein is Homeobox protein knotted-1-like 4 (KNOX4).